Consider the following 209-residue polypeptide: Protein GrpE (209 aa).

Residues 1-13 are compositionally biased toward polar residues; that stretch reads MSNDSSKAKQNQV. Residues 1-33 are disordered; it reads MSNDSSKAKQNQVDEAVEGEILTESEVETGNDE. Residues 15 to 31 show a composition bias toward acidic residues; the sequence is EAVEGEILTESEVETGN.

This sequence belongs to the GrpE family. As to quaternary structure, homodimer.

Its subcellular location is the cytoplasm. Its function is as follows. Participates actively in the response to hyperosmotic and heat shock by preventing the aggregation of stress-denatured proteins, in association with DnaK and GrpE. It is the nucleotide exchange factor for DnaK and may function as a thermosensor. Unfolded proteins bind initially to DnaJ; upon interaction with the DnaJ-bound protein, DnaK hydrolyzes its bound ATP, resulting in the formation of a stable complex. GrpE releases ADP from DnaK; ATP binding to DnaK triggers the release of the substrate protein, thus completing the reaction cycle. Several rounds of ATP-dependent interactions between DnaJ, DnaK and GrpE are required for fully efficient folding. The polypeptide is Protein GrpE (Shewanella woodyi (strain ATCC 51908 / MS32)).